Reading from the N-terminus, the 965-residue chain is Iron-responsive element-binding protein 2 (965 aa).

The segment at 142-170 (NAPNPGGGEAQKPTAKLSPLKGQPRKLPC) is disordered. Residues cysteine 514, cysteine 580, and cysteine 583 each coordinate [4Fe-4S] cluster.

It belongs to the aconitase/IPM isomerase family. [4Fe-4S] cluster serves as cofactor. In terms of processing, ubiquitinated and degraded by the proteasome in presence of high level of iron and oxygen.

It localises to the cytoplasm. In terms of biological role, RNA-binding protein that binds to iron-responsive elements (IRES), which are stem-loop structures found in the 5'-UTR of ferritin, and delta aminolevulinic acid synthase mRNAs, and in the 3'-UTR of transferrin receptor mRNA. Binding to the IRE element in ferritin results in the repression of its mRNA translation. Binding of the protein to the transferrin receptor mRNA inhibits the degradation of this otherwise rapidly degraded mRNA. This Gallus gallus (Chicken) protein is Iron-responsive element-binding protein 2 (IREB2).